A 118-amino-acid polypeptide reads, in one-letter code: Ribonuclease P protein component (118 aa).

The protein belongs to the RnpA family. As to quaternary structure, consists of a catalytic RNA component (M1 or rnpB) and a protein subunit.

It carries out the reaction Endonucleolytic cleavage of RNA, removing 5'-extranucleotides from tRNA precursor.. Functionally, RNaseP catalyzes the removal of the 5'-leader sequence from pre-tRNA to produce the mature 5'-terminus. It can also cleave other RNA substrates such as 4.5S RNA. The protein component plays an auxiliary but essential role in vivo by binding to the 5'-leader sequence and broadening the substrate specificity of the ribozyme. The polypeptide is Ribonuclease P protein component (Shewanella amazonensis (strain ATCC BAA-1098 / SB2B)).